The primary structure comprises 284 residues: GPN-loop GTPase 3 (284 aa).

13–18 (GSGKST) lines the GTP pocket. The Gly-Pro-Asn (GPN)-loop; involved in dimer interface signature appears at 72 to 74 (GPN). GTP is bound at residue 174–177 (TKMD). The segment at 261-284 (KEPKEHEDESSSMFDEYFQEHQNE) is disordered.

It belongs to the GPN-loop GTPase family. Heterodimer with GPN1. Binds to RNA polymerase II (RNAPII). Interacts directly with subunits RPB4 and RPB7 and the CTD of RPB1.

Small GTPase required for proper localization of RNA polymerase II (RNAPII). May act at an RNAP assembly step prior to nuclear import. The sequence is that of GPN-loop GTPase 3 from Bos taurus (Bovine).